Reading from the N-terminus, the 393-residue chain is Negative regulator of ofd1 (393 aa).

The tract at residues 1–51 (MIGRRPQGLRAAASLKKQQQLEKQKQEASYELSGNSSPSKENGSENVDNGE) is disordered. Residues 19-28 (QQLEKQKQEA) show a composition bias toward basic and acidic residues. The span at 32-47 (LSGNSSPSKENGSENV) shows a compositional bias: polar residues.

Belongs to the ETT1 family. In terms of assembly, interacts with ofd1.

It is found in the cytoplasm. It localises to the nucleus. Functionally, required for correct translation termination. Positive regulator of the stability of the N-terminal transcription factor domain (Sre1N) of sre1 which is released from the membrane and enters the nucleus to activate hypoxic gene expression. Also acts as a direct inhibitor of ofd1. Functions probably by inhibiting the ability of the ofd1 to accelerate Sre1N degradation in absence of oxygen. In Schizosaccharomyces pombe (strain 972 / ATCC 24843) (Fission yeast), this protein is Negative regulator of ofd1 (nro1).